Consider the following 80-residue polypeptide: Homeobox protein 7 (80 aa).

Residues 8 to 67 (SNIRNIRSSGISTKKLEDFFSINQYPNKNEIKDFANYYQCDETKIKNWFKGKRDRLKKKS) constitute a DNA-binding region (homeobox). Residues 60–80 (RDRLKKKSSNNEKSGNKFYFK) form a disordered region. Over residues 70–80 (NEKSGNKFYFK) the composition is skewed to low complexity.

The protein localises to the nucleus. In terms of biological role, putative transcription factor. The polypeptide is Homeobox protein 7 (hbx7) (Dictyostelium discoideum (Social amoeba)).